We begin with the raw amino-acid sequence, 517 residues long: Putative thymidine phosphorylase (517 aa).

This sequence belongs to the thymidine/pyrimidine-nucleoside phosphorylase family. Type 2 subfamily.

The enzyme catalyses thymidine + phosphate = 2-deoxy-alpha-D-ribose 1-phosphate + thymine. This Legionella pneumophila subsp. pneumophila (strain Philadelphia 1 / ATCC 33152 / DSM 7513) protein is Putative thymidine phosphorylase.